The chain runs to 422 residues: MDVLGPGQGNNTTSSEGPFGTRANATGISDVTFSYQVITSLLLGTLIFCAVLGNACVVAAIALERSLQNVANYLIGSLAVTDLMVSVLVLPMAALYQVLNKWTLGQVTCDLFIALDVLCCTSSILHLCAIALDRYWAITDPIDYVNKRTPRRAAALISLTWLVGFLISIPPMLGWRTPEDRSDPDACTISKDHGYTIYSTFGAFYIPLLLMLVLYGRIFRAARFRIRKTVKKVEKKGADSRLGASPAPQRKKSANGELGSREWRQGVENKAGGVLCANGAVRQGDDGAALEVIEVHRMGNSKEHLPLPSEAGAIPCAPAFFEKKNERNAEAKRKMALARERKTVKTLGIIMGTFILCWLPFFIVALVLPFCESSCHMPTLLGAIINWLGYSNSLLNPVIYAYFNKDFQNAFKKILKCKFCRR.

The Extracellular portion of the chain corresponds to 1–38 (MDVLGPGQGNNTTSSEGPFGTRANATGISDVTFSYQVI). Asparagine 10, asparagine 11, and asparagine 24 each carry an N-linked (GlcNAc...) asparagine glycan. The helical transmembrane segment at 39-59 (TSLLLGTLIFCAVLGNACVVA) threads the bilayer. At 60-73 (AIALERSLQNVANY) the chain is on the cytoplasmic side. The helical transmembrane segment at 74-98 (LIGSLAVTDLMVSVLVLPMAALYQV) threads the bilayer. Residues 99-107 (LNKWTLGQV) lie on the Extracellular side of the membrane. The chain crosses the membrane as a helical span at residues 108-132 (TCDLFIALDVLCCTSSILHLCAIAL). Cysteine 109 and cysteine 187 are disulfide-bonded. The serotonin site is built by aspartate 116 and cysteine 120. Positions 133–135 (DRY) match the DRY motif; important for ligand-induced conformation changes motif. Residues 133–152 (DRYWAITDPIDYVNKRTPRR) lie on the Cytoplasmic side of the membrane. The helical transmembrane segment at 153–174 (AAALISLTWLVGFLISIPPMLG) threads the bilayer. The Extracellular portion of the chain corresponds to 175–193 (WRTPEDRSDPDACTISKDH). A helical transmembrane segment spans residues 194-216 (GYTIYSTFGAFYIPLLLMLVLYG). Residues 217–346 (RIFRAARFRI…LARERKTVKT (130 aa)) lie on the Cytoplasmic side of the membrane. Positions 237-262 (GADSRLGASPAPQRKKSANGELGSRE) are disordered. Positions 345, 346, and 352 each coordinate 1D-myo-inositol 4-phosphate. Residues 347–370 (LGIIMGTFILCWLPFFIVALVLPF) traverse the membrane as a helical segment. The Extracellular portion of the chain corresponds to 371-378 (CESSCHMP). A helical transmembrane segment spans residues 379–403 (TLLGAIINWLGYSNSLLNPVIYAYF). The NPxxY motif; important for ligand-induced conformation changes and signaling motif lies at 396–400 (NPVIY). Phenylalanine 403, asparagine 404, and lysine 405 together coordinate 1D-myo-inositol 4-phosphate. Residues 404 to 422 (NKDFQNAFKKILKCKFCRR) are Cytoplasmic-facing.

Belongs to the G-protein coupled receptor 1 family. 5-hydroxytryptamine receptor subfamily. HTR1A sub-subfamily. As to quaternary structure, heterodimer; heterodimerizes with GPER1. Interacts with YIF1B. Interacts with GPR39 and GALR1.

The protein localises to the cell membrane. It is found in the cell projection. It localises to the dendrite. Its activity is regulated as follows. G-protein coupled receptor activity is regulated by lipids: phosphatidylinositol 4-phosphate increases HTR1A-mediated activity. Its function is as follows. G-protein coupled receptor for 5-hydroxytryptamine (serotonin). Also functions as a receptor for various drugs and psychoactive substances. Ligand binding causes a conformation change that triggers signaling via guanine nucleotide-binding proteins (G proteins) and modulates the activity of downstream effectors, such as adenylate cyclase. HTR1A is coupled to G(i)/G(o) G alpha proteins and mediates inhibitory neurotransmission: signaling inhibits adenylate cyclase activity and activates a phosphatidylinositol-calcium second messenger system that regulates the release of Ca(2+) ions from intracellular stores. Beta-arrestin family members regulate signaling by mediating both receptor desensitization and resensitization processes. The sequence is that of 5-hydroxytryptamine receptor 1A (HTR1A) from Equus caballus (Horse).